A 274-amino-acid chain; its full sequence is Putative pyruvate, phosphate dikinase regulatory protein (274 aa).

Position 153–160 (153–160 (GISRTSKT)) interacts with ADP.

This sequence belongs to the pyruvate, phosphate/water dikinase regulatory protein family. PDRP subfamily.

The enzyme catalyses N(tele)-phospho-L-histidyl/L-threonyl-[pyruvate, phosphate dikinase] + ADP = N(tele)-phospho-L-histidyl/O-phospho-L-threonyl-[pyruvate, phosphate dikinase] + AMP + H(+). It catalyses the reaction N(tele)-phospho-L-histidyl/O-phospho-L-threonyl-[pyruvate, phosphate dikinase] + phosphate + H(+) = N(tele)-phospho-L-histidyl/L-threonyl-[pyruvate, phosphate dikinase] + diphosphate. Its function is as follows. Bifunctional serine/threonine kinase and phosphorylase involved in the regulation of the pyruvate, phosphate dikinase (PPDK) by catalyzing its phosphorylation/dephosphorylation. The polypeptide is Putative pyruvate, phosphate dikinase regulatory protein (Bartonella tribocorum (strain CIP 105476 / IBS 506)).